Reading from the N-terminus, the 131-residue chain is Agouti-signaling protein (131 aa).

The signal sequence occupies residues 1 to 20 (MNIFRLLLATLLVSLCFLTA). The N-linked (GlcNAc...) asparagine glycan is linked to asparagine 38. The interval 57–104 (KSKKISRKEAEKKRSSKKKASMKNVARPRPPPPNPCVATRNSCKSPAP) is disordered. Disulfide bonds link cysteine 92–cysteine 107, cysteine 99–cysteine 113, cysteine 106–cysteine 124, cysteine 110–cysteine 131, and cysteine 115–cysteine 122. Residues 92 to 131 (CVATRNSCKSPAPACCDPCASCQCRFFRSACTCRVLSPSC) enclose the Agouti domain.

It localises to the secreted. Functionally, involved in the regulation of melanogenesis. The binding of ASP to MC1R precludes alpha-MSH initiated signaling and thus blocks production of cAMP, leading to a down-regulation of eumelanogenesis (brown/black pigment) and thus increasing synthesis of pheomelanin (yellow/red pigment). In Vulpes vulpes (Red fox), this protein is Agouti-signaling protein (ASIP).